A 156-amino-acid polypeptide reads, in one-letter code: Ribosomal RNA large subunit methyltransferase H (156 aa).

S-adenosyl-L-methionine-binding positions include L73, G104, and 123–128 (LSALTL).

Belongs to the RNA methyltransferase RlmH family. Homodimer.

Its subcellular location is the cytoplasm. The catalysed reaction is pseudouridine(1915) in 23S rRNA + S-adenosyl-L-methionine = N(3)-methylpseudouridine(1915) in 23S rRNA + S-adenosyl-L-homocysteine + H(+). In terms of biological role, specifically methylates the pseudouridine at position 1915 (m3Psi1915) in 23S rRNA. The protein is Ribosomal RNA large subunit methyltransferase H of Shewanella loihica (strain ATCC BAA-1088 / PV-4).